The following is a 268-amino-acid chain: Tryptophan synthase alpha chain (268 aa).

Catalysis depends on proton acceptor residues E49 and D60.

This sequence belongs to the TrpA family. As to quaternary structure, tetramer of two alpha and two beta chains.

The catalysed reaction is (1S,2R)-1-C-(indol-3-yl)glycerol 3-phosphate + L-serine = D-glyceraldehyde 3-phosphate + L-tryptophan + H2O. It participates in amino-acid biosynthesis; L-tryptophan biosynthesis; L-tryptophan from chorismate: step 5/5. In terms of biological role, the alpha subunit is responsible for the aldol cleavage of indoleglycerol phosphate to indole and glyceraldehyde 3-phosphate. The chain is Tryptophan synthase alpha chain from Citrobacter koseri (strain ATCC BAA-895 / CDC 4225-83 / SGSC4696).